A 302-amino-acid chain; its full sequence is 1,2-dihydroxynaphthalene dioxygenase (302 aa).

VOC domains lie at 9–124 (ELGY…IFWG) and 149–270 (GLGH…PGWR). Histidine 152 is a binding site for Fe cation. Residues histidine 152, 199 to 200 (DH), histidine 215, and tyrosine 256 contribute to the substrate site. Residue histidine 215 participates in Fe cation binding. Glutamate 266 is a Fe cation binding site.

This sequence belongs to the extradiol ring-cleavage dioxygenase family. The cofactor is Fe(2+).

It carries out the reaction naphthalene-1,2-diol + O2 = 2-hydroxychromene-2-carboxylate + H(+). The protein operates within aromatic compound metabolism; naphthalene degradation. Inhibited by bathophenanthroline sulfonate, o-phenanthroline, 8-hydroxyquinoline, 2,2'-dipyridyl and p-chlormercuribenzoate. Also inhibited by Hg(2+), Cu(2+), Co(2+) and Fe(3+) ions. Functionally, involved in the naphthalene catabolic pathway. Catalyzes the meta-cleavage of 1,2-dihydroxynaphthalene (1,2-DHN) to yield 2-hydroxychromene-2-carboxylic acid. Can also cleave 3-methylcatechol and 4-methylcatechol. The sequence is that of 1,2-dihydroxynaphthalene dioxygenase (nahC) from Pseudomonas putida (Arthrobacter siderocapsulatus).